The following is a 112-amino-acid chain: Histone H2A, sperm (112 aa).

The residue at position 91 (glutamine 91) is an N5-methylglutamine. Lysine 106 is covalently cross-linked (Glycyl lysine isopeptide (Lys-Gly) (interchain with G-Cter in ubiquitin)).

It belongs to the histone H2A family. As to quaternary structure, the nucleosome is a histone octamer containing two molecules each of H2A, H2B, H3 and H4 assembled in one H3-H4 heterotetramer and two H2A-H2B heterodimers. The octamer wraps approximately 147 bp of DNA. Monoubiquitination gives a specific tag for epigenetic transcriptional repression.

Its subcellular location is the nucleus. It is found in the chromosome. In terms of biological role, core component of nucleosome. Nucleosomes wrap and compact DNA into chromatin, limiting DNA accessibility to the cellular machineries which require DNA as a template. Histones thereby play a central role in transcription regulation, DNA repair, DNA replication and chromosomal stability. DNA accessibility is regulated via a complex set of post-translational modifications of histones, also called histone code, and nucleosome remodeling. In Lytechinus pictus (Painted sea urchin), this protein is Histone H2A, sperm.